The sequence spans 501 residues: Probable leucine aminopeptidase 2 (501 aa).

An N-terminal signal peptide occupies residues 1 to 18; that stretch reads MVTMKLLYLTSFASLAVA. A PA domain is found at 119-216; it reads SPSVNATAPL…ADGQALIQMI (98 aa). N-linked (GlcNAc...) asparagine glycosylation is found at Asn-123 and Asn-233. 2 residues coordinate Zn(2+): His-257 and Asp-269. The active-site Proton acceptor is Glu-301. Glu-302 serves as a coordination point for Zn(2+). Asn-316 carries an N-linked (GlcNAc...) asparagine glycan. Asp-330 contacts Zn(2+). Asn-350 is a glycosylation site (N-linked (GlcNAc...) asparagine). His-428 contacts Zn(2+). Asn-433 and Asn-467 each carry an N-linked (GlcNAc...) asparagine glycan. The disordered stretch occupies residues 480-501; it reads AMKRTPHTHTGGTGCYKDRVEQ.

This sequence belongs to the peptidase M28 family. M28A subfamily. Monomer. Requires Zn(2+) as cofactor.

It is found in the secreted. Its function is as follows. Extracellular aminopeptidase that releases a wide variety of amino acids from natural peptides and contributes to pathogenicity. In Aspergillus fumigatus (strain ATCC MYA-4609 / CBS 101355 / FGSC A1100 / Af293) (Neosartorya fumigata), this protein is Probable leucine aminopeptidase 2 (lap2).